A 749-amino-acid polypeptide reads, in one-letter code: EF-hand domain-containing family member C2 (749 aa).

3 DM10 domains span residues Asp-75–Gly-182, His-226–Tyr-368, and Lys-431–Thr-538. The 36-residue stretch at Gly-558 to Gly-593 folds into the EF-hand domain.

As to quaternary structure, microtubule inner protein component of sperm flagellar doublet microtubules. Expressed in airway epithelial cells.

The protein resides in the cytoplasm. The protein localises to the cytoskeleton. Its subcellular location is the cilium axoneme. It localises to the flagellum axoneme. In terms of biological role, microtubule inner protein (MIP) part of the dynein-decorated doublet microtubules (DMTs) in cilia axoneme, which is required for motile cilia beating. The polypeptide is EF-hand domain-containing family member C2 (Homo sapiens (Human)).